Consider the following 466-residue polypeptide: F-box only protein 15 (466 aa).

The F-box domain occupies 27–73 (SASLDSLPSEVLLKILSYLDAAALLCAGCVNRRFYHLANDNFIWIRI).

Directly interacts with SKP1 and CUL1.

Its function is as follows. Substrate-recognition component of the SCF (SKP1-CUL1-F-box protein)-type E3 ubiquitin ligase complex. The chain is F-box only protein 15 (FBXO15) from Bos taurus (Bovine).